Here is a 358-residue protein sequence, read N- to C-terminus: Heme A synthase (358 aa).

8 consecutive transmembrane segments (helical) span residues 22–42 (IQVWLYSILLLCLAIVLVGGA), 107–127 (ILGRLVGLLALLGLIWFWATK), 139–159 (IVPILIAFQGAIGWWMVASGI), 173–193 (AFHLITACFIITFVTYLSRGF), 208–228 (FAGWLVVLILIEIYFGALVAG), 269–289 (FIHRFFAYFLFFVTIIHAFYV), 302–322 (AFFICVMIVVQAFLGIITLLR), and 324–344 (VPIGLGLIHQSVALAILCFSV). H271 contacts heme. Residue H332 participates in heme binding.

Belongs to the COX15/CtaA family. Type 2 subfamily. In terms of assembly, interacts with CtaB. Heme b serves as cofactor.

Its subcellular location is the cell membrane. The catalysed reaction is Fe(II)-heme o + 2 A + H2O = Fe(II)-heme a + 2 AH2. It participates in porphyrin-containing compound metabolism; heme A biosynthesis; heme A from heme O: step 1/1. In terms of biological role, catalyzes the conversion of heme O to heme A by two successive hydroxylations of the methyl group at C8. The first hydroxylation forms heme I, the second hydroxylation results in an unstable dihydroxymethyl group, which spontaneously dehydrates, resulting in the formyl group of heme A. The sequence is that of Heme A synthase from Bartonella quintana (strain Toulouse) (Rochalimaea quintana).